The following is a 660-amino-acid chain: Nuclear factor erythroid 2-related factor 3 (660 aa).

The tract at residues 120 to 214 is disordered; that stretch reads SAVGDGGQSA…KTEEHKMACA (95 aa). A compositionally biased stretch (gly residues) spans 123-135; sequence GDGGQSASAGGGD. Composition is skewed to basic and acidic residues over residues 173-186 and 204-214; these read MLRE…HSSQ and SKTEEHKMACA. Positions 541-604 constitute a bZIP domain; the sequence is LIRDIRRRGK…DIMRQKLHGL (64 aa). The interval 543-562 is basic motif; sequence RDIRRRGKNKVAAQNCRKRK. The leucine-zipper stretch occupies residues 566–573; sequence ILNLEDDI.

This sequence belongs to the bZIP family. CNC subfamily. As to quaternary structure, heterodimer with MAFG, MAFK and other small MAF proteins that binds to the MAF recognition elements (MARE). As to expression, high level expression in brain, thymus, testis and placenta. Medium level expression in uterus, stomach and lung. Low level expression in kidney. No expression in heart, liver, spleen and ovary.

Its subcellular location is the nucleus. Its function is as follows. Activates erythroid-specific, globin gene expression. This Mus musculus (Mouse) protein is Nuclear factor erythroid 2-related factor 3 (Nfe2l3).